The following is a 64-amino-acid chain: Large ribosomal subunit protein bL35 (64 aa).

Residues 19 to 41 form a disordered region; it reads SGKVKRERMNGSHNLEHKNRKRT. The span at 25 to 35 shows a compositional bias: basic and acidic residues; the sequence is ERMNGSHNLEH.

This sequence belongs to the bacterial ribosomal protein bL35 family.

The chain is Large ribosomal subunit protein bL35 from Chlorobaculum tepidum (strain ATCC 49652 / DSM 12025 / NBRC 103806 / TLS) (Chlorobium tepidum).